A 346-amino-acid polypeptide reads, in one-letter code: Glycerol-1-phosphate dehydrogenase [NAD(P)+] (346 aa).

NAD(+) is bound by residues 93–97 and 115–118; these read GSIID and TTAS. Asp-120 contacts substrate. Residue Ser-124 coordinates NAD(+). Asp-167 is a substrate binding site. Zn(2+) is bound by residues Asp-167 and His-247. His-251 contacts substrate. His-263 contributes to the Zn(2+) binding site.

The protein belongs to the glycerol-1-phosphate dehydrogenase family. It depends on Zn(2+) as a cofactor.

The protein localises to the cytoplasm. It catalyses the reaction sn-glycerol 1-phosphate + NAD(+) = dihydroxyacetone phosphate + NADH + H(+). It carries out the reaction sn-glycerol 1-phosphate + NADP(+) = dihydroxyacetone phosphate + NADPH + H(+). The protein operates within membrane lipid metabolism; glycerophospholipid metabolism. Catalyzes the NAD(P)H-dependent reduction of dihydroxyacetonephosphate (DHAP or glycerone phosphate) to glycerol 1-phosphate (G1P). The G1P thus generated is used as the glycerophosphate backbone of phospholipids in the cellular membranes of Archaea. In Pyrococcus abyssi (strain GE5 / Orsay), this protein is Glycerol-1-phosphate dehydrogenase [NAD(P)+].